The primary structure comprises 225 residues: Glutathione S-transferase Mu 5 (225 aa).

One can recognise a GST N-terminal domain in the interval 5 to 92 (KSMVLGYWDI…YIARKHNMCG (88 aa)). Residue S6 is modified to Phosphoserine. Glutathione-binding positions include 11 to 12 (YW), 50 to 54 (WLDVK), 63 to 64 (NL), and 76 to 77 (QS). The region spanning 94–212 (TEEEKIRVDI…QSDRCFKMPI (119 aa)) is the GST C-terminal domain. Residue Y120 coordinates substrate.

It belongs to the GST superfamily. Mu family. In terms of assembly, homodimer. In terms of processing, the N-terminus is blocked. As to expression, expressed in testis and brain. Very low expression in liver, kidney, heart and lung.

The protein localises to the cytoplasm. It catalyses the reaction RX + glutathione = an S-substituted glutathione + a halide anion + H(+). Functionally, conjugation of reduced glutathione to a wide number of exogenous and endogenous hydrophobic electrophiles. This Rattus norvegicus (Rat) protein is Glutathione S-transferase Mu 5 (Gstm5).